The chain runs to 527 residues: GMP synthase [glutamine-hydrolyzing] (527 aa).

Positions 19 to 212 constitute a Glutamine amidotransferase type-1 domain; it reads KIIVLDYGSQ…AFSICGAKGD (194 aa). Residue Cys96 is the Nucleophile of the active site. Residues His186 and Glu188 contribute to the active site. Positions 213 to 402 constitute a GMPS ATP-PPase domain; the sequence is WSMANFVDMQ…LGMPDEVVWR (190 aa). ATP is bound at residue 240–246; sequence SGGVDSS.

As to quaternary structure, homodimer.

The catalysed reaction is XMP + L-glutamine + ATP + H2O = GMP + L-glutamate + AMP + diphosphate + 2 H(+). Its pathway is purine metabolism; GMP biosynthesis; GMP from XMP (L-Gln route): step 1/1. Its function is as follows. Catalyzes the synthesis of GMP from XMP. The polypeptide is GMP synthase [glutamine-hydrolyzing] (Streptococcus thermophilus (strain ATCC BAA-250 / LMG 18311)).